Reading from the N-terminus, the 300-residue chain is GTPase Era (300 aa).

The 169-residue stretch at 7–175 (YCGFIAIVGR…EKFVRESLKE (169 aa)) folds into the Era-type G domain. Residues 15-22 (GRPNVGKS) are G1. GTP is bound at residue 15–22 (GRPNVGKS). The segment at 41-45 (QTTRH) is G2. The G3 stretch occupies residues 62-65 (DTPG). GTP-binding positions include 62–66 (DTPGL) and 124–127 (NKVD). The interval 124-127 (NKVD) is G4. Residues 154-156 (ISA) form a G5 region. The KH type-2 domain occupies 206 to 283 (MGEELPYSVT…HLELWVKVKA (78 aa)).

This sequence belongs to the TRAFAC class TrmE-Era-EngA-EngB-Septin-like GTPase superfamily. Era GTPase family. Monomer.

It localises to the cytoplasm. The protein localises to the cell inner membrane. An essential GTPase that binds both GDP and GTP, with rapid nucleotide exchange. Plays a role in 16S rRNA processing and 30S ribosomal subunit biogenesis and possibly also in cell cycle regulation and energy metabolism. This is GTPase Era from Glaesserella parasuis serovar 5 (strain SH0165) (Haemophilus parasuis).